We begin with the raw amino-acid sequence, 336 residues long: Ribosomal RNA large subunit methyltransferase F (336 aa).

Residues 1–24 (MPRPTSPHPDAERKSASPLHPRNR) are disordered.

It belongs to the methyltransferase superfamily. METTL16/RlmF family.

It localises to the cytoplasm. The catalysed reaction is adenosine(1618) in 23S rRNA + S-adenosyl-L-methionine = N(6)-methyladenosine(1618) in 23S rRNA + S-adenosyl-L-homocysteine + H(+). Its function is as follows. Specifically methylates the adenine in position 1618 of 23S rRNA. In Pseudomonas aeruginosa (strain LESB58), this protein is Ribosomal RNA large subunit methyltransferase F.